We begin with the raw amino-acid sequence, 498 residues long: L-proline--[L-prolyl-carrier protein] ligase (498 aa).

It belongs to the ATP-dependent AMP-binding enzyme family.

The catalysed reaction is holo-[peptidyl-carrier protein] + L-proline + ATP = L-prolyl-[peptidyl-carrier protein] + AMP + diphosphate. In terms of biological role, involved in the biosynthesis of pyoluteorin. Catalyzes the conversion of L-proline to L-prolyl-AMP and the transfer of the L-prolyl group to acyl carrier protein PltL. The protein is L-proline--[L-prolyl-carrier protein] ligase of Pseudomonas fluorescens (strain ATCC BAA-477 / NRRL B-23932 / Pf-5).